We begin with the raw amino-acid sequence, 180 residues long: Major urinary protein 2 (180 aa).

A signal peptide spans 1–18; the sequence is MKMLLLLCLGLTLVCVHA. Residues C82 and C175 are joined by a disulfide bond.

It belongs to the calycin superfamily. Lipocalin family. Abundant in the urine of adult male mice but absent from that of females.

Its subcellular location is the secreted. Binds pheromones that are released from drying urine of males. These pheromones affect the sexual behavior of females. This Mus musculus (Mouse) protein is Major urinary protein 2 (Mup2).